A 169-amino-acid chain; its full sequence is Peptide deformylase (169 aa).

Fe cation-binding residues include Cys-91 and His-133. Glu-134 is an active-site residue. Residue His-137 participates in Fe cation binding.

The protein belongs to the polypeptide deformylase family. Requires Fe(2+) as cofactor.

It carries out the reaction N-terminal N-formyl-L-methionyl-[peptide] + H2O = N-terminal L-methionyl-[peptide] + formate. Functionally, removes the formyl group from the N-terminal Met of newly synthesized proteins. Requires at least a dipeptide for an efficient rate of reaction. N-terminal L-methionine is a prerequisite for activity but the enzyme has broad specificity at other positions. This Haemophilus influenzae (strain ATCC 51907 / DSM 11121 / KW20 / Rd) protein is Peptide deformylase.